The chain runs to 79 residues: Small ribosomal subunit protein bS16c (79 aa).

It belongs to the bacterial ribosomal protein bS16 family.

Its subcellular location is the plastid. It is found in the chloroplast. This Thalassiosira pseudonana (Marine diatom) protein is Small ribosomal subunit protein bS16c.